The primary structure comprises 360 residues: UDP-N-acetylglucosamine--N-acetylmuramyl-(pentapeptide) pyrophosphoryl-undecaprenol N-acetylglucosamine transferase (360 aa).

Positions 198 and 289 each coordinate UDP-N-acetyl-alpha-D-glucosamine.

This sequence belongs to the glycosyltransferase 28 family. MurG subfamily.

The protein localises to the cell membrane. It catalyses the reaction Mur2Ac(oyl-L-Ala-gamma-D-Glu-L-Lys-D-Ala-D-Ala)-di-trans,octa-cis-undecaprenyl diphosphate + UDP-N-acetyl-alpha-D-glucosamine = beta-D-GlcNAc-(1-&gt;4)-Mur2Ac(oyl-L-Ala-gamma-D-Glu-L-Lys-D-Ala-D-Ala)-di-trans,octa-cis-undecaprenyl diphosphate + UDP + H(+). It participates in cell wall biogenesis; peptidoglycan biosynthesis. Cell wall formation. Catalyzes the transfer of a GlcNAc subunit on undecaprenyl-pyrophosphoryl-MurNAc-pentapeptide (lipid intermediate I) to form undecaprenyl-pyrophosphoryl-MurNAc-(pentapeptide)GlcNAc (lipid intermediate II). The sequence is that of UDP-N-acetylglucosamine--N-acetylmuramyl-(pentapeptide) pyrophosphoryl-undecaprenol N-acetylglucosamine transferase from Streptococcus pyogenes serotype M6 (strain ATCC BAA-946 / MGAS10394).